A 346-amino-acid polypeptide reads, in one-letter code: Small ribosomal subunit biogenesis GTPase RsgA (346 aa).

The interval 1-26 (MAKRKLTQNQTRRIQSNNAKTLHRHK) is disordered. Over residues 7–20 (TQNQTRRIQSNNAK) the composition is skewed to polar residues. The region spanning 103–271 (ENEISRPDYY…LIDSPGIREF (169 aa)) is the CP-type G domain. GTP contacts are provided by residues 159–162 (NKVD) and 213–221 (GQSGVGKSS). 4 residues coordinate Zn(2+): cysteine 295, cysteine 300, histidine 302, and cysteine 308.

Belongs to the TRAFAC class YlqF/YawG GTPase family. RsgA subfamily. As to quaternary structure, monomer. Associates with 30S ribosomal subunit, binds 16S rRNA. Requires Zn(2+) as cofactor.

It localises to the cytoplasm. One of several proteins that assist in the late maturation steps of the functional core of the 30S ribosomal subunit. Helps release RbfA from mature subunits. May play a role in the assembly of ribosomal proteins into the subunit. Circularly permuted GTPase that catalyzes slow GTP hydrolysis, GTPase activity is stimulated by the 30S ribosomal subunit. The polypeptide is Small ribosomal subunit biogenesis GTPase RsgA (Haemophilus influenzae (strain PittEE)).